A 233-amino-acid chain; its full sequence is Cysteine-rich venom protein (233 aa).

The N-terminal stretch at 1–12 is a signal peptide; that stretch reads PILAAVLQQSSG. The region spanning 31–159 is the SCP domain; it reads VDLHNSLRRS…PYSYFFVCQY (129 aa). Intrachain disulfides connect cysteine 68/cysteine 146, cysteine 85/cysteine 160, cysteine 141/cysteine 157, cysteine 179/cysteine 186, cysteine 182/cysteine 191, cysteine 195/cysteine 228, cysteine 204/cysteine 222, and cysteine 213/cysteine 226. The 34-residue stretch at 195–228 folds into the ShKT domain; it reads CTRENKFTNCNTMVQQSSCQDNYMKTNCPASCFC.

This sequence belongs to the CRISP family. Expressed by the venom gland.

The protein resides in the secreted. In terms of biological role, blocks contraction of smooth muscle elicited by high potassium-induced depolarization, but does not block caffeine-stimulated contraction. May target voltage-gated calcium channels on smooth muscle. The sequence is that of Cysteine-rich venom protein from Trimeresurus stejnegeri (Chinese green tree viper).